The chain runs to 107 residues: 2Fe-2S ferredoxin CtmE (107 aa).

The region spanning 3–106 (VKVTYVDSAN…GLVIHTLEPE (104 aa)) is the 2Fe-2S ferredoxin-type domain. Residues cysteine 41, cysteine 47, cysteine 50, and cysteine 87 each contribute to the [2Fe-2S] cluster site.

Belongs to the adrenodoxin/putidaredoxin family. It depends on [2Fe-2S] cluster as a cofactor.

The protein operates within terpene metabolism; monoterpene degradation. Involved in the degradation of the cyclic monoterpene limonene. Probably part of an electron transfer system involved in the oxidation of limonene to perillyl alcohol. This is 2Fe-2S ferredoxin CtmE from Castellaniella defragrans (strain DSM 12143 / CCUG 39792 / 65Phen) (Alcaligenes defragrans).